Consider the following 185-residue polypeptide: ATP synthase subunit delta (185 aa).

The protein belongs to the ATPase delta chain family. As to quaternary structure, F-type ATPases have 2 components, F(1) - the catalytic core - and F(0) - the membrane proton channel. F(1) has five subunits: alpha(3), beta(3), gamma(1), delta(1), epsilon(1). F(0) has three main subunits: a(1), b(2) and c(10-14). The alpha and beta chains form an alternating ring which encloses part of the gamma chain. F(1) is attached to F(0) by a central stalk formed by the gamma and epsilon chains, while a peripheral stalk is formed by the delta and b chains.

It is found in the cell inner membrane. F(1)F(0) ATP synthase produces ATP from ADP in the presence of a proton or sodium gradient. F-type ATPases consist of two structural domains, F(1) containing the extramembraneous catalytic core and F(0) containing the membrane proton channel, linked together by a central stalk and a peripheral stalk. During catalysis, ATP synthesis in the catalytic domain of F(1) is coupled via a rotary mechanism of the central stalk subunits to proton translocation. Its function is as follows. This protein is part of the stalk that links CF(0) to CF(1). It either transmits conformational changes from CF(0) to CF(1) or is implicated in proton conduction. In Ehrlichia chaffeensis (strain ATCC CRL-10679 / Arkansas), this protein is ATP synthase subunit delta.